Reading from the N-terminus, the 433-residue chain is 3-phosphoshikimate 1-carboxyvinyltransferase (433 aa).

3 residues coordinate 3-phosphoshikimate: lysine 15, serine 16, and arginine 20. Lysine 15 is a binding site for phosphoenolpyruvate. Residues glycine 96 and arginine 124 each contribute to the phosphoenolpyruvate site. 3-phosphoshikimate contacts are provided by serine 169, glutamine 171, aspartate 318, and lysine 345. Residue glutamine 171 coordinates phosphoenolpyruvate. Aspartate 318 serves as the catalytic Proton acceptor. 2 residues coordinate phosphoenolpyruvate: arginine 349 and arginine 393.

The protein belongs to the EPSP synthase family. Monomer.

The protein localises to the cytoplasm. It catalyses the reaction 3-phosphoshikimate + phosphoenolpyruvate = 5-O-(1-carboxyvinyl)-3-phosphoshikimate + phosphate. The protein operates within metabolic intermediate biosynthesis; chorismate biosynthesis; chorismate from D-erythrose 4-phosphate and phosphoenolpyruvate: step 6/7. Its function is as follows. Catalyzes the transfer of the enolpyruvyl moiety of phosphoenolpyruvate (PEP) to the 5-hydroxyl of shikimate-3-phosphate (S3P) to produce enolpyruvyl shikimate-3-phosphate and inorganic phosphate. The sequence is that of 3-phosphoshikimate 1-carboxyvinyltransferase from Chlorobium phaeovibrioides (strain DSM 265 / 1930) (Prosthecochloris vibrioformis (strain DSM 265)).